The chain runs to 103 residues: Large ribosomal subunit protein uL24 (103 aa).

This sequence belongs to the universal ribosomal protein uL24 family. As to quaternary structure, part of the 50S ribosomal subunit.

In terms of biological role, one of two assembly initiator proteins, it binds directly to the 5'-end of the 23S rRNA, where it nucleates assembly of the 50S subunit. One of the proteins that surrounds the polypeptide exit tunnel on the outside of the subunit. This chain is Large ribosomal subunit protein uL24, found in Haemophilus influenzae (strain PittEE).